We begin with the raw amino-acid sequence, 1785 residues long: Plexin-2 (1785 aa).

A signal peptide spans 1-17 (MLPESVFLLLISHFLRA). The region spanning 18–444 (VTQPPFETEG…MPYGIILEEL (427 aa)) is the Sema domain. Over 18 to 1139 (VTQPPFETEG…SDHALPSRLS (1122 aa)) the chain is Extracellular. N66 is a glycosylation site (N-linked (GlcNAc...) asparagine). 9 cysteine pairs are disulfide-bonded: C84/C91, C118/C126, C247/C349, C263/C300, C318/C336, C447/C464, C453/C487, C456/C473, and C467/C479. N249 is a glycosylation site (N-linked (GlcNAc...) asparagine). Positions 446 to 488 (TCSHHSSCTECLVSVDPLCQWCHPTQSCTTSARCTSPVTSQCP) constitute a PSI 1 domain. Residues N502, N536, and N572 are each glycosylated (N-linked (GlcNAc...) asparagine). A disulfide bridge links C524 with C544. One can recognise a PSI 2 domain in the interval 577–617 (DCSGYGTCSSCMSSEYNCAWCSGLHKCSNSCGALEKSKACV). 2 N-linked (GlcNAc...) asparagine glycosylation sites follow: N679 and N702. One can recognise a PSI 3 domain in the interval 707-748 (SCTNLASDCSSCLALSPSLSCGWCNRQCSHECHESKATAVCD). IPT/TIG domains lie at 750–837 (PRID…LYSF), 840–924 (TSIF…PFEY), and 928–1040 (PSIS…LSPF). Residues N864, N886, N984, and N1016 are each glycosylated (N-linked (GlcNAc...) asparagine). The helical transmembrane segment at 1140–1160 (LLILGLLLFIVVTLTVMCLVF) threads the bilayer. A coiled-coil region spans residues 1159–1197 (VFKRRRQEREKEYRKIQLQMENLENNVRKECKQAFAELQ). The Cytoplasmic portion of the chain corresponds to 1161-1785 (KRRRQEREKE…HIYSTISDYE (625 aa)).

The protein belongs to the plexin family. In terms of assembly, interacts with mab-20. In terms of tissue distribution, expressed predominantly in the central nervous system from embryonic to adult stages. Expressed in early embryos in ventral neuroblasts. Expressed in neurons and in a subset of posterior lateral and ventral epidermal cells following epidermal enclosure. Present in neurons, muscles and weakly expressed in epidermal cells of the larval tail.

It is found in the cell membrane. Its function is as follows. Involved as a receptor for mab-20/sema-2a in the formation or stabilization of cell-cell contacts at several stages of epithelial morphogenesis. In early embryonic development, required for proper ventral closure of the epidermis. During male tail morphogenesis, involved in precursor cell sorting and in the formation of distinct sensory rays. Involved in axon guidance of SDQL neurons during neurogenesis. Probably in response to stimulation by mab-20, regulates fln-1-mediated remodeling of the actin cytoskeleton and thus axon guidance and/or fasciculation of DD/VD neurons. The protein is Plexin-2 of Caenorhabditis elegans.